A 641-amino-acid chain; its full sequence is Fructose-1,6-bisphosphatase class 3 (641 aa).

This sequence belongs to the FBPase class 3 family. Mn(2+) is required as a cofactor.

It catalyses the reaction beta-D-fructose 1,6-bisphosphate + H2O = beta-D-fructose 6-phosphate + phosphate. It participates in carbohydrate biosynthesis; gluconeogenesis. In Latilactobacillus sakei subsp. sakei (strain 23K) (Lactobacillus sakei subsp. sakei), this protein is Fructose-1,6-bisphosphatase class 3.